The following is a 122-amino-acid chain: Large ribosomal subunit protein uL14 (122 aa).

This sequence belongs to the universal ribosomal protein uL14 family. As to quaternary structure, part of the 50S ribosomal subunit. Forms a cluster with proteins L3 and L19. In the 70S ribosome, L14 and L19 interact and together make contacts with the 16S rRNA in bridges B5 and B8.

Functionally, binds to 23S rRNA. Forms part of two intersubunit bridges in the 70S ribosome. In Bradyrhizobium diazoefficiens (strain JCM 10833 / BCRC 13528 / IAM 13628 / NBRC 14792 / USDA 110), this protein is Large ribosomal subunit protein uL14.